Here is a 360-residue protein sequence, read N- to C-terminus: Photosystem II protein D1 (360 aa).

3 consecutive transmembrane segments (helical) span residues 29–46 (YIGW…TATS), 118–133 (HFLL…EWEL), and 142–156 (WIFV…AASA). Chlorophyll a is bound at residue His-118. Tyr-126 serves as a coordination point for pheophytin a. Residues Asp-170 and Glu-189 each coordinate [CaMn4O5] cluster. Residues 197-218 (FHMAGVAGVFGGSLFSAMHGSL) form a helical membrane-spanning segment. His-198 contacts chlorophyll a. Residues His-215 and 264–265 (SF) contribute to the a quinone site. His-215 provides a ligand contact to Fe cation. Residue His-272 coordinates Fe cation. A helical transmembrane segment spans residues 274-288 (FLAAWPVVGIWLTAM). 4 residues coordinate [CaMn4O5] cluster: His-332, Glu-333, Asp-342, and Ala-344. Residues 345-360 (SGDVLPVALNAPAVNG) constitute a propeptide that is removed on maturation.

The protein belongs to the reaction center PufL/M/PsbA/D family. PSII is composed of 1 copy each of membrane proteins PsbA, PsbB, PsbC, PsbD, PsbE, PsbF, PsbH, PsbI, PsbJ, PsbK, PsbL, PsbM, PsbT, PsbX, PsbY, PsbZ, Psb30/Ycf12, at least 3 peripheral proteins of the oxygen-evolving complex and a large number of cofactors. It forms dimeric complexes. Requires The D1/D2 heterodimer binds P680, chlorophylls that are the primary electron donor of PSII, and subsequent electron acceptors. It shares a non-heme iron and each subunit binds pheophytin, quinone, additional chlorophylls, carotenoids and lipids. D1 provides most of the ligands for the Mn4-Ca-O5 cluster of the oxygen-evolving complex (OEC). There is also a Cl(-1) ion associated with D1 and D2, which is required for oxygen evolution. The PSII complex binds additional chlorophylls, carotenoids and specific lipids. as cofactor. Post-translationally, tyr-161 forms a radical intermediate that is referred to as redox-active TyrZ, YZ or Y-Z. In terms of processing, C-terminally processed by CTPA; processing is essential to allow assembly of the oxygen-evolving complex and thus photosynthetic growth.

The protein resides in the plastid. It is found in the chloroplast thylakoid membrane. It catalyses the reaction 2 a plastoquinone + 4 hnu + 2 H2O = 2 a plastoquinol + O2. In terms of biological role, photosystem II (PSII) is a light-driven water:plastoquinone oxidoreductase that uses light energy to abstract electrons from H(2)O, generating O(2) and a proton gradient subsequently used for ATP formation. It consists of a core antenna complex that captures photons, and an electron transfer chain that converts photonic excitation into a charge separation. The D1/D2 (PsbA/PsbD) reaction center heterodimer binds P680, the primary electron donor of PSII as well as several subsequent electron acceptors. This Trieres chinensis (Marine centric diatom) protein is Photosystem II protein D1.